Consider the following 228-residue polypeptide: UPF0173 metal-dependent hydrolase Dred_1740 (228 aa).

The protein belongs to the UPF0173 family.

This Desulforamulus reducens (strain ATCC BAA-1160 / DSM 100696 / MI-1) (Desulfotomaculum reducens) protein is UPF0173 metal-dependent hydrolase Dred_1740.